The sequence spans 103 residues: Large ribosomal subunit protein bL21 (103 aa).

Belongs to the bacterial ribosomal protein bL21 family. As to quaternary structure, part of the 50S ribosomal subunit. Contacts protein L20.

In terms of biological role, this protein binds to 23S rRNA in the presence of protein L20. This Variovorax paradoxus (strain S110) protein is Large ribosomal subunit protein bL21.